The sequence spans 295 residues: Tyrosine recombinase XerD (295 aa).

The region spanning methionine 1–leucine 85 is the Core-binding (CB) domain. Residues lysine 106–threonine 289 enclose the Tyr recombinase domain. Active-site residues include arginine 146, lysine 170, histidine 241, arginine 244, and histidine 267. Residue tyrosine 276 is the O-(3'-phospho-DNA)-tyrosine intermediate of the active site.

The protein belongs to the 'phage' integrase family. XerD subfamily. As to quaternary structure, forms a cyclic heterotetrameric complex composed of two molecules of XerC and two molecules of XerD.

It localises to the cytoplasm. Its function is as follows. Site-specific tyrosine recombinase, which acts by catalyzing the cutting and rejoining of the recombining DNA molecules. The XerC-XerD complex is essential to convert dimers of the bacterial chromosome into monomers to permit their segregation at cell division. It also contributes to the segregational stability of plasmids. In Staphylococcus epidermidis (strain ATCC 12228 / FDA PCI 1200), this protein is Tyrosine recombinase XerD.